Here is a 417-residue protein sequence, read N- to C-terminus: Serine hydroxymethyltransferase (417 aa).

The residue at position 54 (K54) is an N6-acetyllysine. Residues L121 and 125–127 contribute to the (6S)-5,6,7,8-tetrahydrofolate site; that span reads GHL. N6-(pyridoxal phosphate)lysine is present on K229. N6-acetyllysine occurs at positions 250, 285, and 354. 355–357 lines the (6S)-5,6,7,8-tetrahydrofolate pocket; it reads SPF. K375 carries the N6-acetyllysine modification.

This sequence belongs to the SHMT family. As to quaternary structure, homodimer. Pyridoxal 5'-phosphate is required as a cofactor.

The protein localises to the cytoplasm. It carries out the reaction (6R)-5,10-methylene-5,6,7,8-tetrahydrofolate + glycine + H2O = (6S)-5,6,7,8-tetrahydrofolate + L-serine. It participates in one-carbon metabolism; tetrahydrofolate interconversion. It functions in the pathway amino-acid biosynthesis; glycine biosynthesis; glycine from L-serine: step 1/1. Its function is as follows. Catalyzes the reversible interconversion of serine and glycine with tetrahydrofolate (THF) serving as the one-carbon carrier. This reaction serves as the major source of one-carbon groups required for the biosynthesis of purines, thymidylate, methionine, and other important biomolecules. Also exhibits THF-independent aldolase activity toward beta-hydroxyamino acids, producing glycine and aldehydes, via a retro-aldol mechanism. In Escherichia coli O1:K1 / APEC, this protein is Serine hydroxymethyltransferase.